Consider the following 285-residue polypeptide: HTH-type transcriptional regulator HexR (285 aa).

One can recognise an HTH rpiR-type domain in the interval 2 to 78 (KNLLEQIQSR…IQLAQSLASG (77 aa)). A DNA-binding region (H-T-H motif) is located at residues 38 to 57 (IAALAQAAAVSEPTVNRFCR). The SIS domain maps to 122 to 261 (AVDLLIQARQ…ATGVTLRRGV (140 aa)).

Its function is as follows. Involved in regulation of glucose metabolism. Transcriptional repressor of the gap-1 gene and of the edd-glk-gltR-2 and zwf-pgl-eda operons. Acts by binding directly to an inverted pseudopalindromic sequence in the promoter region. The sequence is that of HTH-type transcriptional regulator HexR from Pseudomonas aeruginosa (strain ATCC 15692 / DSM 22644 / CIP 104116 / JCM 14847 / LMG 12228 / 1C / PRS 101 / PAO1).